The following is a 38-amino-acid chain: Large ribosomal subunit protein bL36 (38 aa).

This sequence belongs to the bacterial ribosomal protein bL36 family.

The polypeptide is Large ribosomal subunit protein bL36 (Anaeromyxobacter dehalogenans (strain 2CP-1 / ATCC BAA-258)).